Reading from the N-terminus, the 408-residue chain is MNAPVHVDQNFEEVINAARSMREIDRKRYLWMISPALPVIGIGILAGYQFSPRPIKKIFALGGPIVLHIIIPVIDTIIGKDASNPTSEEIKQLENDPYYARLVKSFIPLQYIANVYACYLVSRKKTSFIDKILLGISMGAINGIAVNTAHELSHKADRLDHILSHLALVPTGYNHFRIEHPYGHHKRAATPEDPASSQMGETFYEFWPRTVFGSLKSAIEIETHRLKRKGKKFWSKDNELLQGWGMSAAFHSSIIAIFGKGTIPYLVTQAFYGISLFEIINYIEHYGLKRQKRADGNYERTMPEHSWNNNNIVTNLFLYQLQRHSDHHAYPTRPFQALRHFDEAPELPSGYASMLLPAMIPPLWFKMMDKRVFEHYKEDLTKANIYPKRRAKILAKFGLTDPNIENGK.

4 helical membrane-spanning segments follow: residues 30–50, 58–78, 102–122, and 126–146; these read LWMISPALPVIGIGILAGYQF, IFALGGPIVLHIIIPVIDTII, LVKSFIPLQYIANVYACYLVS, and TSFIDKILLGISMGAINGIAV. Residues His-150, His-154, His-180, His-184, and His-185 each contribute to the Fe cation site. A helical transmembrane segment spans residues 254 to 274; the sequence is IIAIFGKGTIPYLVTQAFYGI. Fe cation contacts are provided by His-324, His-327, and His-328.

The protein belongs to the fatty acid desaturase type 1 family. AlkB subfamily. Fe(3+) is required as a cofactor.

It localises to the cell inner membrane. The catalysed reaction is octane + 2 reduced [rubredoxin] + O2 + 2 H(+) = 2 oxidized [rubredoxin] + octan-1-ol + H2O. Its pathway is hydrocarbon metabolism; alkane degradation. In terms of biological role, catalyzes the hydroxylation of n-alkanes in the presence of a NADH-rubredoxin reductase and rubredoxin. It preferably hydroxylases long-chain-length alkanes with at least 12 carbon atoms. The polypeptide is Alkane 1-monooxygenase (alkB) (Acinetobacter baylyi (strain ATCC 33305 / BD413 / ADP1)).